We begin with the raw amino-acid sequence, 403 residues long: Ribose-phosphate pyrophosphokinase 1, chloroplastic (403 aa).

The N-terminal 49 residues, 1-49 (MASLGLSFPPAAKTPTYLASSSSTFFSNSSLSVRTSQFRSRNSVFACVK), are a transit peptide targeting the chloroplast. 4 residues coordinate Mg(2+): aspartate 217, histidine 219, aspartate 228, and aspartate 232. The interval 303–318 (GKVAIMVDDMIDTAGT) is binding of phosphoribosylpyrophosphate.

It belongs to the ribose-phosphate pyrophosphokinase family. The cofactor is Mg(2+).

Its subcellular location is the plastid. It localises to the chloroplast. The catalysed reaction is D-ribose 5-phosphate + ATP = 5-phospho-alpha-D-ribose 1-diphosphate + AMP + H(+). The sequence is that of Ribose-phosphate pyrophosphokinase 1, chloroplastic (PRS1) from Arabidopsis thaliana (Mouse-ear cress).